The sequence spans 481 residues: Putative F-box/FBD/LRR-repeat protein At5g25850 (481 aa).

The F-box domain maps to 19–69 (INRLSQLSDPLICQILSHLPIKEVVTTSVLSTRWKNIWLSVPSLELIYSIF). 3 LRR repeats span residues 123-151 (VRRV…KLFH), 173-198 (VWFP…KIDV), and 328-356 (HVTL…IVAF). An FBD domain is found at 401–452 (QLSFSSVPKCLLSSLQFVELNAQILRFDGEILNLAKYFLENSSILQKLTLHP).

The protein is Putative F-box/FBD/LRR-repeat protein At5g25850 of Arabidopsis thaliana (Mouse-ear cress).